We begin with the raw amino-acid sequence, 349 residues long: Fe(3+) ions import ATP-binding protein FbpC (349 aa).

The ABC transporter domain occupies 4 to 236 (LDFNKIGKSY…PIDEPTATFL (233 aa)). An ATP-binding site is contributed by 36–43 (GPSGSGKT).

The protein belongs to the ABC transporter superfamily. Fe(3+) ion importer (TC 3.A.1.10) family. The complex is composed of two ATP-binding proteins (FbpC), two transmembrane proteins (FbpB) and a solute-binding protein (FbpA).

It is found in the cell inner membrane. It carries out the reaction Fe(3+)(out) + ATP + H2O = Fe(3+)(in) + ADP + phosphate + H(+). Its function is as follows. Part of the ABC transporter complex FbpABC involved in Fe(3+) ions import. Responsible for energy coupling to the transport system. In Yersinia enterocolitica, this protein is Fe(3+) ions import ATP-binding protein FbpC.